Consider the following 290-residue polypeptide: Ankyrin repeat and SOCS box protein 9 (290 aa).

At methionine 1 the chain carries N-acetylmethionine. Residues 1 to 11 (MDGEQRGRSDR) show a composition bias toward basic and acidic residues. Residues 1 to 20 (MDGEQRGRSDRPGGSPHLPF) are disordered. 6 ANK repeats span residues 31 to 60 (SDWS…PVNI), 64 to 93 (DHVS…QVNG), 97 to 126 (DWRT…TPHP), 129 to 158 (ELAS…NIDY), 162 to 191 (HLGT…SVNQ), and 194 to 223 (GLDS…NAQA). The region spanning 236-290 (PLESPLIQIFLQNEGPQSLRQLCRLRIRKCFGIRQHHKISELLLPEDLKRFLLHL) is the SOCS box domain.

Belongs to the ankyrin SOCS box (ASB) family. Substrate-recognition component of the ECS(ASB9) complex, composed of ASB9, CUL5, ELOB, ELOC and RNF7/RBX2.

It is found in the mitochondrion. Its pathway is protein modification; protein ubiquitination. In terms of biological role, substrate-recognition component of a cullin-5-RING E3 ubiquitin-protein ligase complex (ECS complex, also named CRL5 complex), which mediates the ubiquitination and subsequent proteasomal degradation of target proteins. The ECS(ASB9) complex catalyzes ubiquitination of creatine kinases CKB and CKMT1A. This chain is Ankyrin repeat and SOCS box protein 9, found in Mus musculus (Mouse).